Here is a 365-residue protein sequence, read N- to C-terminus: Patr class I histocompatibility antigen, A-126 alpha chain (365 aa).

Positions 1 to 24 (MAVMAPRTLVLLLSGALALTQTWA) are cleaved as a signal peptide. The tract at residues 25 to 114 (GSHSMRYFST…LRGYYNQSED (90 aa)) is alpha-1. At 25–308 (GSHSMRYFST…EPSSQPTIPI (284 aa)) the chain is on the extracellular side. N-linked (GlcNAc...) asparagine glycosylation is present at Asn-110. The tract at residues 115 to 206 (GSHTIQLMFG…ENGKETLQRT (92 aa)) is alpha-2. Intrachain disulfides connect Cys-125–Cys-188 and Cys-227–Cys-283. Residues 207–298 (DPPKTHMTHH…GLPKPLTLRW (92 aa)) form an alpha-3 region. The Ig-like C1-type domain maps to 209–295 (PKTHMTHHPI…QHEGLPKPLT (87 aa)). The interval 299-308 (EPSSQPTIPI) is connecting peptide. A helical membrane pass occupies residues 309–332 (VGIIAGLVLLGAVITGAVVAAVMW). Over 333 to 365 (RRKSSDRKGGSYSQAASSDSAQGSDVSLTACKV) the chain is Cytoplasmic. Residues 338 to 365 (DRKGGSYSQAASSDSAQGSDVSLTACKV) form a disordered region. The span at 342 to 359 (GSYSQAASSDSAQGSDVS) shows a compositional bias: low complexity. The residue at position 343 (Ser-343) is a Phosphoserine. The residue at position 344 (Tyr-344) is a Phosphotyrosine. Ser-345, Ser-349, Ser-352, Ser-356, and Ser-359 each carry phosphoserine.

The protein belongs to the MHC class I family. Heterodimer of an alpha chain and a beta chain (beta-2-microglobulin).

Its subcellular location is the membrane. Involved in the presentation of foreign antigens to the immune system. The sequence is that of Patr class I histocompatibility antigen, A-126 alpha chain (Patr-A) from Pan troglodytes (Chimpanzee).